Consider the following 1433-residue polypeptide: Inositol hexakisphosphate and diphosphoinositol-pentakisphosphate kinase 1 (1433 aa).

Substrate is bound at residue 64 to 65 (KK). ATP-binding positions include R145, K198, H205, R224, 248-251 (EEFM), and 257-259 (DVK). 224-225 (RK) provides a ligand contact to substrate. Positions 259 and 273 each coordinate substrate. Residues S275, D320, and 332–334 (DVN) contribute to the ATP site. Position 337–340 (337–340 (SFVK)) interacts with substrate. The tract at residues 382–453 (PTTSGTMMEL…VLDITRLLLA (72 aa)) is polyphosphoinositide-binding domain. A disordered region spans residues 915–1020 (GVEEEGSAPA…PTEMKQSGLG (106 aa)). A phosphoserine mark is found at S944 and S987. A compositionally biased stretch (polar residues) spans 1005–1020 (FSSSRPPTEMKQSGLG). A phosphoserine mark is found at S1037 and S1073. Over residues 1134–1143 (MHSSQASDNP) the composition is skewed to polar residues. Disordered stretches follow at residues 1134–1199 (MHSS…DQPS) and 1235–1257 (EPNQSPQVPPMETSQPYEEVSQP). Phosphoserine occurs at positions 1145 and 1152. The segment covering 1168–1186 (SSGPSSTVSSAGPSSPTTV) has biased composition (low complexity). Polar residues-rich tracts occupy residues 1187-1199 (DGNSQFGFSDQPS) and 1236-1250 (PNQSPQVPPMETSQP).

It belongs to the histidine acid phosphatase family. VIP1 subfamily. Widely expressed, with a higher expression in skeletal muscle, heart and brain.

The protein resides in the cytoplasm. Its subcellular location is the cytosol. It localises to the cell membrane. The catalysed reaction is 1D-myo-inositol hexakisphosphate + ATP = 1-diphospho-1D-myo-inositol 2,3,4,5,6-pentakisphosphate + ADP. It catalyses the reaction 5-diphospho-1D-myo-inositol 1,2,3,4,6-pentakisphosphate + ATP + H(+) = 1,5-bis(diphospho)-1D-myo-inositol 2,3,4,6-tetrakisphosphate + ADP. In terms of biological role, bifunctional inositol kinase that acts in concert with the IP6K kinases IP6K1, IP6K2 and IP6K3 to synthesize the diphosphate group-containing inositol pyrophosphates diphosphoinositol pentakisphosphate, PP-InsP5, and bis-diphosphoinositol tetrakisphosphate, (PP)2-InsP4. PP-InsP5 and (PP)2-InsP4, also respectively called InsP7 and InsP8, regulate a variety of cellular processes, including apoptosis, vesicle trafficking, cytoskeletal dynamics, exocytosis, insulin signaling and neutrophil activation. Phosphorylates inositol hexakisphosphate (InsP6) at position 1 to produce PP-InsP5 which is in turn phosphorylated by IP6Ks to produce (PP)2-InsP4. Alternatively, phosphorylates PP-InsP5 at position 1, produced by IP6Ks from InsP6, to produce (PP)2-InsP4. Activated when cells are exposed to hyperosmotic stress. This Homo sapiens (Human) protein is Inositol hexakisphosphate and diphosphoinositol-pentakisphosphate kinase 1.